The following is a 365-amino-acid chain: Endophilin-B1 (365 aa).

At methionine 1 the chain carries N-acetylmethionine. Positions 1–30 (MNIMDFNVKKLAADAGTFLSRAVQFTEEKL) are membrane-binding amphipathic helix. The segment at 1–37 (MNIMDFNVKKLAADAGTFLSRAVQFTEEKLGQAEKTE) is required for membrane binding. The BAR domain maps to 27–261 (EEKLGQAEKT…LGSFPSNYVS (235 aa)). A Phosphothreonine; by CDK5 modification is found at threonine 145. Residues 156-185 (KTIAKERKLLQNKRLDLDAAKTRLKKAKAA) are a coiled coil. The 61-residue stretch at 305-365 (SSTRKARVLY…VPITYLELLN (61 aa)) folds into the SH3 domain.

It belongs to the endophilin family. As to quaternary structure, homodimer, and heterodimer with SH3GLB2. Binds BAX; induction of apoptosis augments BAX binding. Binds DNM1, HTT, AMPH, BIN1 and ARFGAP1. Interacts with UVRAG; UVRAG bridges the interaction to BECN1 indicative for an association with the PI3K complex II (PI3KC3-C2). Post-translationally, phosphorylated at Thr-145 by CDK5; this phosphorylation is required for autophagy induction in starved neurons and facilitates homodimerization. In terms of tissue distribution, expressed in brain, heart, lung and spleen. Low level in liver and testis.

Its subcellular location is the cytoplasm. The protein resides in the golgi apparatus membrane. It is found in the mitochondrion outer membrane. The protein localises to the cytoplasmic vesicle. It localises to the autophagosome membrane. Its subcellular location is the midbody. In terms of biological role, may be required for normal outer mitochondrial membrane dynamics. Required for coatomer-mediated retrograde transport in certain cells. May recruit other proteins to membranes with high curvature. May promote membrane fusion. Involved in activation of caspase-dependent apoptosis by promoting BAX/BAK1 activation. Involved in caspase-independent apoptosis during nutrition starvation and involved in the regulation of autophagy. Activates lipid kinase activity of PIK3C3 during autophagy probably by associating with the PI3K complex II (PI3KC3-C2). Associated with PI3KC3-C2 during autophagy may regulate the trafficking of ATG9A from the Golgi complex to the peripheral cytoplasm for the formation of autophagosomes by inducing Golgi membrane tubulation and fragmentation. Involved in regulation of degradative endocytic trafficking and cytokinesis, probably in the context of PI3KC3-C2. The sequence is that of Endophilin-B1 from Rattus norvegicus (Rat).